The sequence spans 622 residues: Pyranose 2-oxidase (622 aa).

The first 28 residues, 1–28, serve as a signal peptide directing secretion; that stretch reads MSASSSDPFHSFAKTSFTSKAAKRATAH. A propeptide spanning residues 29–37 is cleaved from the precursor; it reads SLPPLPGPG. A Tele-8alpha-FAD histidine modification is found at His167. Substrate contacts are provided by Gln449 and His451. His546 (proton acceptor) is an active-site residue. Residue Asn591 is part of the active site.

Belongs to the GMC oxidoreductase family. In terms of assembly, homotetramer. The cofactor is FAD. In terms of processing, not glycosylated.

The protein resides in the periplasm. The enzyme catalyses D-glucose + O2 = 2-dehydro-D-glucose + H2O2. Its function is as follows. Catalyzes the oxidation of various aldopyranoses and disaccharides on carbon-2 to the corresponding 2-keto sugars concomitant with the reduction of O(2) to H(2)O(2). Plays an important role in lignin degradation of wood rot fungi by supplying the essential cosubstrate H(2)O(2) for the ligninolytic peroxidases, lignin peroxidase and manganese-dependent peroxidase. The preferred substrate is D-glucose which is converted to 2-dehydro-D-glucose, an intermediate of a secondary metabolic pathway leading to the antibiotic cortalcerone. Also acts on D-xylose, together with D-glucose the major sugars derived from wood, on L-sorbose, D-galactose and 1,5-anhydroglucitol, a diagnostic marker of diabetes mellitus. This Phlebiopsis gigantea (White-rot fungus) protein is Pyranose 2-oxidase (p2ox).